The sequence spans 230 residues: MSGAAFPSPTAEIAEMNRIHYELEYTEGISQRMRIPEQLKVAPYGSEDQELPDHELLHTAMMHVPERIIVAGHSDDMPFPRDLDLIQSTPQESTLSLKTPPRVLTLSDRPLDFLEMEQTSSVSHPSEEVRTQTKTRRERSVSENAGVHHNGPLARNDSAFALATLDSTLEGGTDDMAVVDATSLRRQIVKLNRRLQLLEEENKERAKREMVMYSITVAFWLVNSWVWFRR.

The Cytoplasmic segment spans residues 1–210 (MSGAAFPSPT…ENKERAKREM (210 aa)). The disordered stretch occupies residues 117 to 153 (EQTSSVSHPSEEVRTQTKTRRERSVSENAGVHHNGPL). Serine 142 is subject to Phosphoserine. A coiled-coil region spans residues 179-210 (VDATSLRRQIVKLNRRLQLLEEENKERAKREM). Residues 211–228 (VMYSITVAFWLVNSWVWF) traverse the membrane as a helical; Anchor for type IV membrane protein segment. The Extracellular portion of the chain corresponds to 229-230 (RR).

Belongs to the Tango11 family.

It localises to the mitochondrion outer membrane. The protein resides in the peroxisome. Functionally, plays a role in mitochondrial and peroxisomal fission. Promotes the recruitment and association of the fission mediator dynamin-related protein 1 (DNM1L) to the mitochondrial surface. The sequence is that of Mitochondrial fission factor homolog B from Danio rerio (Zebrafish).